An 89-amino-acid polypeptide reads, in one-letter code: uncharacterized protein (89 aa).

This is an uncharacterized protein from Klebsiella aerogenes (Enterobacter aerogenes).